A 26-amino-acid polypeptide reads, in one-letter code: Toxin b subunit alpha (26 aa).

As to quaternary structure, toxin b is a heterodimer composed of toxin alpha and toxin beta. In terms of tissue distribution, expressed by the venom gland.

Its subcellular location is the secreted. Functionally, binds to sodium channels (Nav) and affects the channel activation process. The protein is Toxin b subunit alpha of Androctonus crassicauda (Arabian fat-tailed scorpion).